A 310-amino-acid polypeptide reads, in one-letter code: Low affinity immunoglobulin gamma Fc region receptor II-b (310 aa).

Positions 1–42 (MGILSFLPVLATESDWADCKSPQPWGHMLLWTAVLFLAPVAG) are cleaved as a signal peptide. Over 43–217 (TPAAPPKAVL…KPVTITVQAP (175 aa)) the chain is Extracellular. 2 consecutive Ig-like C2-type domains span residues 48-127 (PKAV…VHLT) and 131-213 (EWLV…VTIT). 2 disulfides stabilise this stretch: Cys71-Cys113 and Cys152-Cys196. Residues Asn106, Asn180, and Asn187 are each glycosylated (N-linked (GlcNAc...) asparagine). The helical transmembrane segment at 218–240 (SSSPMGIIVAVVTGIAVAAIVAA) threads the bilayer. Residues 241 to 310 (VVALIYCRKK…LEEPDDQNRI (70 aa)) lie on the Cytoplasmic side of the membrane. Residues 290 to 295 (ITYSLL) carry the ITIM motif motif. Tyr292 is modified (phosphotyrosine; by SRC-type Tyr-kinases).

Interacts with INPP5D/SHIP1. Interacts with FGR. Interacts with LYN. In terms of assembly, (Microbial infection) Isoform IIB1 interacts with measles virus protein N. Protein N is released in the blood following lysis of measles infected cells. This interaction presumably block inflammatory immune response. Phosphorylated by the SRC-type Tyr-kinases LYN and BLK. As to expression, is the most broadly distributed Fc-gamma-receptor. Expressed in monocyte, neutrophils, macrophages, basophils, eosinophils, Langerhans cells, B-cells, platelets cells and placenta (endothelial cells). Not detected in natural killer cells.

The protein resides in the cell membrane. Receptor for the Fc region of complexed or aggregated immunoglobulins gamma. Low affinity receptor. Involved in a variety of effector and regulatory functions such as phagocytosis of immune complexes and modulation of antibody production by B-cells. Binding to this receptor results in down-modulation of previous state of cell activation triggered via antigen receptors on B-cells (BCR), T-cells (TCR) or via another Fc receptor. Isoform IIB1 fails to mediate endocytosis or phagocytosis. Isoform IIB2 does not trigger phagocytosis. The protein is Low affinity immunoglobulin gamma Fc region receptor II-b (FCGR2B) of Homo sapiens (Human).